The following is a 289-amino-acid chain: MKVTATIAAASMAIAAASADADTTSRQLILGGSIIPSGQKTYSVGIRSTAGGDTYCGGALISPTHVLTTTMCTKHAKPDFVAVGTHYVNGTKDGEQLKVIQAQNHTDFNKTGNGEYDFALLTLEKPSKFAPVKLPKADDSDIKPGMWSKAMGWGWTSFPNGSPSNEMQGVNLQVWSNEDCSQVYVINPTNVCAGGVAGKDACVADTGGPLIKENGAGDKDDVLIGLVNWGYGCGDEGAPTVYSRVSSALKWVNPIIKTKQVKTAVPVQQAISGKHGVPIKQGMPGTVRN.

The first 19 residues, 1-19 (MKVTATIAAASMAIAAASA), serve as a signal peptide directing secretion. The 229-residue stretch at 29 to 257 (ILGGSIIPSG…ALKWVNPIIK (229 aa)) folds into the Peptidase S1 domain. Residues Cys-56 and Cys-72 are joined by a disulfide bond. Residues Asn-89, Asn-104, and Asn-109 are each glycosylated (N-linked (GlcNAc...) asparagine). 2 cysteine pairs are disulfide-bonded: Cys-180–Cys-192 and Cys-202–Cys-233.

This sequence belongs to the peptidase S1 family.

It is found in the secreted. In terms of biological role, secreted effector that suppresses host plant glucan elicitor-mediated defense responses. Targets host endoglucanases and inhibits the endoglucanase-mediated release of elicitor-active glucan oligosaccharides from P.sojae cell walls. The polypeptide is Glucanase inhibitor protein 2 (Phytophthora sojae (Soybean stem and root rot agent)).